Consider the following 435-residue polypeptide: E3 ubiquitin-protein ligase PUB22 (435 aa).

The region spanning 6-81 is the U-box domain; that stretch reads EIPSFFLCPI…QSWCTLNASY (76 aa).

As to quaternary structure, interacts with RPN12A. Binds to EXO70B2. Auto-ubiquitinated leading to degradation via the 26S proteasome. This Auto-ubiquitination is repressed by the bacterial elicitor flg22 thus leading to a transiently increased protein stabilization and accumulation.

The protein resides in the cytoplasm. The enzyme catalyses S-ubiquitinyl-[E2 ubiquitin-conjugating enzyme]-L-cysteine + [acceptor protein]-L-lysine = [E2 ubiquitin-conjugating enzyme]-L-cysteine + N(6)-ubiquitinyl-[acceptor protein]-L-lysine.. It participates in protein modification; protein ubiquitination. E3 ubiquitin-protein ligase that negatively regulates water stress response. May control in coordination with PUB23 a drought signaling pathway by ubiquitinating cytosolic RPN12a. Acts as a negative regulator of the immunity triggered by the pathogen-associated molecular patterns (PAMPs), in association with PUB23 and PUB24. Regulates EXO70B2 ubiquitination and degradation via the 26S proteasome to attenuate PAMP-induced signaling. This is E3 ubiquitin-protein ligase PUB22 from Arabidopsis thaliana (Mouse-ear cress).